A 388-amino-acid polypeptide reads, in one-letter code: Zinc finger protein ubi-d4 A (388 aa).

The tract at residues 60-190 (GPGSAPGQLY…AKGKGIGSAR (131 aa)) is disordered. 2 stretches are compositionally biased toward basic and acidic residues: residues 97–107 (PDPEQMLKKEG) and 123–137 (DPIEKRIMPDSRDDD). Positions 156–170 (PDDFLDDLDDEDYEE) are enriched in acidic residues. The segment at 205-228 (YACDICGKRYKNRPGLSYHYAHSH) adopts a C2H2-type zinc-finger fold. The interval 233–264 (EGAGAEDKEDSQPPTPIMHRPEEQKSKKGPDG) is disordered. The segment covering 251–262 (HRPEEQKSKKGP) has biased composition (basic and acidic residues). 2 PHD-type zinc fingers span residues 269–329 (NNYC…CKCC) and 326–376 (CKCC…CLDL).

The protein belongs to the requiem/DPF family.

The protein resides in the cytoplasm. Its subcellular location is the nucleus. May be a transcription factor required for the apoptosis response following survival factor withdrawal from myeloid cells. Might also have a role in the development and maturation of lymphoid cells. The chain is Zinc finger protein ubi-d4 A (req-a) from Xenopus laevis (African clawed frog).